The following is a 1544-amino-acid chain: Lysine-specific demethylase 5B (1544 aa).

A JmjN domain is found at 32–73 (CPVFEPSWEEFADPFAFIHKIRPIAEQTGICKVRPPPDWQPP). Residues 97–187 (TRVKLNFLDQ…ILNPYNLFLS (91 aa)) form the ARID domain. Glycyl lysine isopeptide (Lys-Gly) (interchain with G-Cter in SUMO2) cross-links involve residues Lys148, Lys204, Lys209, Lys242, Lys274, and Lys278. The interval 201–230 (TDTKDKEYKPHDIPQRQSVQPSETCPPARR) is disordered. Positions 202 to 214 (DTKDKEYKPHDIP) are enriched in basic and acidic residues. Residues 309–359 (LYVCLLCGSGNDEDRLLLCDGCDDSYHTFCLIPPLHDVPKGDWRCPKCLAQ) form a PHD-type 1 zinc finger. Residue Tyr425 participates in 2-oxoglutarate binding. Residues 453-619 (EYLDSGWNLN…LGRQCVEHYR (167 aa)) form the JmjC domain. Fe cation contacts are provided by His499 and Glu501. 3 residues coordinate 2-oxoglutarate: Ser507, Asn509, and Lys517. His587 provides a ligand contact to Fe cation. The C5HC2 zinc finger occupies 692-744 (CVKCKTTCFMSAISCSCKPGLLVCLHHVKELCSCPPYKYKLRYRYTLDDLYPM). A Glycyl lysine isopeptide (Lys-Gly) (interchain with G-Cter in SUMO2) cross-link involves residue Lys769. At Lys832 the chain carries N6-acetyllysine. Residue Ser986 is modified to Phosphoserine. The PHD-type 2 zinc finger occupies 1176–1224 (IKICLCQKAPAAPMIQCELCRDAFHTSCVAVPSISQGLRIWLCPHCRRS). At Ser1328 the chain carries Phosphoserine. A disordered region spans residues 1374–1400 (PSPAQQTDRSSPVRPSSEKNDCCRGKR). Polar residues predominate over residues 1376–1387 (PAQQTDRSSPVR). The segment covering 1389–1400 (SSEKNDCCRGKR) has biased composition (basic and acidic residues). A Glycyl lysine isopeptide (Lys-Gly) (interchain with G-Cter in SUMO2) cross-link involves residue Lys1450. Ser1456 is subject to Phosphoserine. The PHD-type 3 zinc finger occupies 1484–1538 (DAICPAVSCLQPEGDEVDWVQCDGSCNQWFHQVCVGVSPEMAEKEDYICVRCTVK).

This sequence belongs to the JARID1 histone demethylase family. As to quaternary structure, interacts with FOXG1B, PAX9, MYC, MYCN and RB1. Interacts with HDAC1, HDAC4, HDAC5 and HDAC7. Interacts (via PHD-type 1 zinc finger) with histone H3 unmodified at 'Lys-4'; the interaction is inhibited when histone H3 is methylated at 'Arg-2' or 'Lys-4'. The cofactor is Fe(2+). As to expression, ubiquitously expressed, with highest levels in testis. Down-regulated in melanoma and glioblastoma. Up-regulated in breast cancer (at protein level).

The protein resides in the nucleus. The catalysed reaction is N(6),N(6),N(6)-trimethyl-L-lysyl(4)-[histone H3] + 3 2-oxoglutarate + 3 O2 = L-lysyl(4)-[histone H3] + 3 formaldehyde + 3 succinate + 3 CO2. With respect to regulation, several specific inhibitors are being developed and tested. The inhibitor KDOAM-25 inhibits its demethylase activity, resulting to cell cycle arrest in myeloma cells. Its function is as follows. Histone demethylase that demethylates 'Lys-4' of histone H3, thereby playing a central role in histone code. Does not demethylate histone H3 'Lys-9' or H3 'Lys-27'. Demethylates trimethylated, dimethylated and monomethylated H3 'Lys-4'. Acts as a transcriptional corepressor for FOXG1B and PAX9. Favors the proliferation of breast cancer cells by repressing tumor suppressor genes such as BRCA1 and HOXA5. In contrast, may act as a tumor suppressor for melanoma. Represses the CLOCK-BMAL1 heterodimer-mediated transcriptional activation of the core clock component PER2. This Homo sapiens (Human) protein is Lysine-specific demethylase 5B (KDM5B).